The sequence spans 179 residues: ATP synthase subunit delta (179 aa).

Belongs to the ATPase delta chain family. In terms of assembly, F-type ATPases have 2 components, F(1) - the catalytic core - and F(0) - the membrane proton channel. F(1) has five subunits: alpha(3), beta(3), gamma(1), delta(1), epsilon(1). F(0) has three main subunits: a(1), b(2) and c(10-14). The alpha and beta chains form an alternating ring which encloses part of the gamma chain. F(1) is attached to F(0) by a central stalk formed by the gamma and epsilon chains, while a peripheral stalk is formed by the delta and b chains.

The protein localises to the cell inner membrane. Its function is as follows. F(1)F(0) ATP synthase produces ATP from ADP in the presence of a proton or sodium gradient. F-type ATPases consist of two structural domains, F(1) containing the extramembraneous catalytic core and F(0) containing the membrane proton channel, linked together by a central stalk and a peripheral stalk. During catalysis, ATP synthesis in the catalytic domain of F(1) is coupled via a rotary mechanism of the central stalk subunits to proton translocation. This protein is part of the stalk that links CF(0) to CF(1). It either transmits conformational changes from CF(0) to CF(1) or is implicated in proton conduction. This is ATP synthase subunit delta from Burkholderia cenocepacia (strain ATCC BAA-245 / DSM 16553 / LMG 16656 / NCTC 13227 / J2315 / CF5610) (Burkholderia cepacia (strain J2315)).